We begin with the raw amino-acid sequence, 293 residues long: Glycine--tRNA ligase alpha subunit (293 aa).

It belongs to the class-II aminoacyl-tRNA synthetase family. Tetramer of two alpha and two beta subunits.

The protein resides in the cytoplasm. The catalysed reaction is tRNA(Gly) + glycine + ATP = glycyl-tRNA(Gly) + AMP + diphosphate. This Prochlorococcus marinus (strain MIT 9211) protein is Glycine--tRNA ligase alpha subunit.